A 429-amino-acid chain; its full sequence is 3-phosphoshikimate 1-carboxyvinyltransferase (429 aa).

K23, S24, and R28 together coordinate 3-phosphoshikimate. K23 provides a ligand contact to phosphoenolpyruvate. Residues G97 and R125 each coordinate phosphoenolpyruvate. Positions 170, 171, 172, 198, 314, 338, and 342 each coordinate 3-phosphoshikimate. Residue Q172 participates in phosphoenolpyruvate binding. D314 serves as the catalytic Proton acceptor. 3 residues coordinate phosphoenolpyruvate: R346, R388, and K413.

This sequence belongs to the EPSP synthase family. In terms of assembly, monomer.

It is found in the cytoplasm. It carries out the reaction 3-phosphoshikimate + phosphoenolpyruvate = 5-O-(1-carboxyvinyl)-3-phosphoshikimate + phosphate. Its pathway is metabolic intermediate biosynthesis; chorismate biosynthesis; chorismate from D-erythrose 4-phosphate and phosphoenolpyruvate: step 6/7. Functionally, catalyzes the transfer of the enolpyruvyl moiety of phosphoenolpyruvate (PEP) to the 5-hydroxyl of shikimate-3-phosphate (S3P) to produce enolpyruvyl shikimate-3-phosphate and inorganic phosphate. In Pectobacterium carotovorum subsp. carotovorum (strain PC1), this protein is 3-phosphoshikimate 1-carboxyvinyltransferase.